A 565-amino-acid chain; its full sequence is MELEYESKRSLYIPYAGPILLEFPLLNKGSAFSIEERNDFNLNGLLPETVESIEEQAERAWRQFQDFKNNNDKHVYLRNIQDTNETLFYRLLDNHLEEMMPIIYTPTVGAACEHFSEIYRRARGLFISYPNRANIEDMLQNATKQNVKVIVVTDGERILGLGDQGIGGMGIPIGKLSLYTACGGISPAYTLPVVLDVGTNNQQLLNDPLYMGWRHPRITGEEYDNFVNEFIQAVKSRWPNVLLQFEDFAQKNAMPLLERYRDEVCCFNDDIQGTAAVTLGTLIAASRAAGGKLCEQKVVFLGAGSAGCGIAEQIIAQMKSEGLSDEEARARVFMVDRFGLLTDRLPNLLNFQSRLVQKSDSLSGWDSANDSLSLLDVVRNAKPDIMIGVSGQPGLFSEEIVREMHKHCTRPIIMPLSNPTSRVEATPQDIMAWTDGCALVATGSPFSPVSWKDKTYPIAQCNNSYIFPGIGLGVIASGASRVTDSMLMAASRALADCSPLVNDGEGPVLPEVNDIQGVSKIIAMAVGKAAQLAGVAVVTSEDVLSKAIAANFWLPQYRNYRRTSI.

Tyr104 serves as the catalytic Proton donor. Arg157 contacts NAD(+). Lys175 functions as the Proton acceptor in the catalytic mechanism. Positions 246, 247, and 270 each coordinate a divalent metal cation. Residues Asp270 and Asn418 each coordinate NAD(+).

It belongs to the malic enzymes family. In terms of assembly, homotetramer. Mg(2+) serves as cofactor. Requires Mn(2+) as cofactor.

The enzyme catalyses (S)-malate + NAD(+) = pyruvate + CO2 + NADH. The catalysed reaction is oxaloacetate + H(+) = pyruvate + CO2. This chain is NAD-dependent malic enzyme, found in Erwinia tasmaniensis (strain DSM 17950 / CFBP 7177 / CIP 109463 / NCPPB 4357 / Et1/99).